We begin with the raw amino-acid sequence, 712 residues long: Eukaryotic translation initiation factor 3 subunit B (712 aa).

The interval 1-98 is sufficient for interaction with HCR1 and TIF32; it reads MSLTEAEYHE…LFVQFETSEM (98 aa). The interval 1-224 is sufficient for interaction with PIC8; sequence MSLTEAEYHE…GVQSWGGADF (224 aa). Positions 37–124 constitute an RRM domain; sequence NYVVVDGAPI…HRLLVNRLSD (88 aa). WD repeat units lie at residues 191–229, 230–293, 301–339, 342–384, 452–493, 513–555, and 566–604; these read RKFF…SIDK, FMHN…RTFA, QKEM…LLDK, IKID…QTAR, ELKE…DFYA, ITDK…SNKN, and DKFS…YEFT.

Belongs to the eIF-3 subunit B family. As to quaternary structure, component of the eukaryotic translation initiation factor 3 (eIF-3) complex.

The protein resides in the cytoplasm. Functionally, RNA-binding component of the eukaryotic translation initiation factor 3 (eIF-3) complex, which is involved in protein synthesis of a specialized repertoire of mRNAs and, together with other initiation factors, stimulates binding of mRNA and methionyl-tRNAi to the 40S ribosome. The eIF-3 complex specifically targets and initiates translation of a subset of mRNAs involved in cell proliferation. The protein is Eukaryotic translation initiation factor 3 subunit B of Scheffersomyces stipitis (strain ATCC 58785 / CBS 6054 / NBRC 10063 / NRRL Y-11545) (Yeast).